Here is a 709-residue protein sequence, read N- to C-terminus: Phosphate acetyltransferase (709 aa).

A phosphate acetyltransferase region spans residues 389–709 (EFCYRLKILS…TIALTSIQSL (321 aa)).

In the N-terminal section; belongs to the CobB/CobQ family. This sequence in the C-terminal section; belongs to the phosphate acetyltransferase and butyryltransferase family. Homohexamer.

The protein resides in the cytoplasm. It catalyses the reaction acetyl-CoA + phosphate = acetyl phosphate + CoA. It participates in metabolic intermediate biosynthesis; acetyl-CoA biosynthesis; acetyl-CoA from acetate: step 2/2. In terms of biological role, involved in acetate metabolism. The protein is Phosphate acetyltransferase (pta) of Buchnera aphidicola subsp. Schizaphis graminum (strain Sg).